A 196-amino-acid chain; its full sequence is Elongation factor Ts (196 aa).

Residues 80–83 form an involved in Mg(2+) ion dislocation from EF-Tu region; it reads TDFV.

Belongs to the EF-Ts family.

Its subcellular location is the cytoplasm. In terms of biological role, associates with the EF-Tu.GDP complex and induces the exchange of GDP to GTP. It remains bound to the aminoacyl-tRNA.EF-Tu.GTP complex up to the GTP hydrolysis stage on the ribosome. The protein is Elongation factor Ts of Thermosipho melanesiensis (strain DSM 12029 / CIP 104789 / BI429).